We begin with the raw amino-acid sequence, 87 residues long: MAKATSSLVVPIIFLVIFALVEQNTGCFDYDVYQPCDHCRERCLKYYPVTRKAICRKNHCVCIGPCPDDKAIPDVKLFKNVKEQILS.

Residues 1–23 form the signal peptide; it reads MAKATSSLVVPIIFLVIFALVEQ. 4 cysteine pairs are disulfide-bonded: Cys-27–Cys-66, Cys-36–Cys-55, Cys-39–Cys-60, and Cys-43–Cys-62.

It belongs to the DEFL family.

Its subcellular location is the secreted. This is Defensin-like protein 176 (LCR65) from Arabidopsis thaliana (Mouse-ear cress).